A 502-amino-acid polypeptide reads, in one-letter code: MFS-type transporeter aprT (502 aa).

The interval M1 to P38 is disordered. 11 helical membrane passes run H45–I65, I114–A136, V150–P170, W175–W195, F214–K234, V239–P259, V302–V322, A336–P356, V380–I400, L403–L423, and L464–L484. A glycan (N-linked (GlcNAc...) asparagine) is linked at N495.

The protein belongs to the major facilitator superfamily.

Its subcellular location is the cell membrane. In terms of biological role, MFS-rype transporer; part of the gene cluster that mediates the biosynthesis of the asperipin-2a, a bicyclic peptide that possesses two macrocyclic ether rings consisting of 14- and 17-membered paracyclophans. AprT is likely to be involved in the cellular export of asperipin-2a. This Aspergillus flavus (strain ATCC 200026 / FGSC A1120 / IAM 13836 / NRRL 3357 / JCM 12722 / SRRC 167) protein is MFS-type transporeter aprT.